The following is a 353-amino-acid chain: uncharacterized protein (353 aa).

Positions 233 to 245 (ASCSNNEPSASLE) are enriched in polar residues. The interval 233-265 (ASCSNNEPSASLESESRHFSPVNSLSPSSLSTD) is disordered. A compositionally biased stretch (low complexity) spans 252–263 (SPVNSLSPSSLS).

This is an uncharacterized protein from Saccharomyces cerevisiae (strain ATCC 204508 / S288c) (Baker's yeast).